We begin with the raw amino-acid sequence, 438 residues long: V-type ATP synthase beta chain (438 aa).

This sequence belongs to the ATPase alpha/beta chains family.

Its function is as follows. Produces ATP from ADP in the presence of a proton gradient across the membrane. The V-type beta chain is a regulatory subunit. The polypeptide is V-type ATP synthase beta chain (atpB) (Chlamydia pneumoniae (Chlamydophila pneumoniae)).